Reading from the N-terminus, the 268-residue chain is 3-methyl-2-oxobutanoate hydroxymethyltransferase (268 aa).

Mg(2+) contacts are provided by Asp44 and Asp83. Residues 44 to 45, Asp83, and Lys113 contribute to the 3-methyl-2-oxobutanoate site; that span reads DS. Residue Glu115 coordinates Mg(2+). Residue Glu182 is the Proton acceptor of the active site.

It belongs to the PanB family. In terms of assembly, homodecamer; pentamer of dimers. It depends on Mg(2+) as a cofactor.

The protein resides in the cytoplasm. The enzyme catalyses 3-methyl-2-oxobutanoate + (6R)-5,10-methylene-5,6,7,8-tetrahydrofolate + H2O = 2-dehydropantoate + (6S)-5,6,7,8-tetrahydrofolate. The protein operates within cofactor biosynthesis; (R)-pantothenate biosynthesis; (R)-pantoate from 3-methyl-2-oxobutanoate: step 1/2. Its function is as follows. Catalyzes the reversible reaction in which hydroxymethyl group from 5,10-methylenetetrahydrofolate is transferred onto alpha-ketoisovalerate to form ketopantoate. The sequence is that of 3-methyl-2-oxobutanoate hydroxymethyltransferase from Synechococcus elongatus (strain ATCC 33912 / PCC 7942 / FACHB-805) (Anacystis nidulans R2).